A 258-amino-acid polypeptide reads, in one-letter code: Synapse differentiation-inducing gene protein 1 (258 aa).

The Cytoplasmic portion of the chain corresponds to 1 to 181; that stretch reads MDGIIEQKSM…NFLMMPPRDH (181 aa). Position 137 is a phosphoserine (Ser137). A helical membrane pass occupies residues 182 to 202; that stretch reads LGLSVFSMLCCFWPLGIAAFY. At 203 to 228 the chain is on the extracellular side; the sequence is LSHETNKAVAKGDLHQASTSSRRALF. Residues 229 to 249 constitute an intramembrane region (helical); that stretch reads LAVLSITIGTGVYVGVAVALI. The Extracellular portion of the chain corresponds to 250-258; it reads AYLSKNNHL.

It belongs to the CD225/Dispanin family. In terms of assembly, homodimer. Interacts with GRIA1 and GRIA2.

The protein localises to the cell membrane. The protein resides in the early endosome membrane. It is found in the postsynaptic density membrane. It localises to the synapse. Its subcellular location is the cell projection. The protein localises to the dendrite. The protein resides in the dendritic spine. Its function is as follows. May regulate AMPA receptor content at nascent synapses, and have a role in postsynaptic development and maturation. This is Synapse differentiation-inducing gene protein 1 (SYNDIG1) from Macaca fascicularis (Crab-eating macaque).